The chain runs to 189 residues: MADYSRYTVGVLALQGAVTEHISQIESLGAKAIAVKQVEQLNQLDALVLPGGESTAMRRLMEANGLFERLKTFDKPILGTCAGLILLADEIIGGEQVHLAKMAIKVQRNAFGRQIDSFQTPLTVSGLDKPFPAVFIRAPYITEVGENVEVLAEWQGNVVLAKQGHFFACAFHPELTNDNRIMALLLAQL.

52–54 (GES) is a binding site for L-glutamine. Catalysis depends on cysteine 81, which acts as the Nucleophile. L-glutamine is bound by residues arginine 108 and 136 to 137 (IR). Residues histidine 172 and glutamate 174 each act as charge relay system in the active site.

Belongs to the glutaminase PdxT/SNO family. In the presence of PdxS, forms a dodecamer of heterodimers. Only shows activity in the heterodimer.

It catalyses the reaction aldehydo-D-ribose 5-phosphate + D-glyceraldehyde 3-phosphate + L-glutamine = pyridoxal 5'-phosphate + L-glutamate + phosphate + 3 H2O + H(+). The catalysed reaction is L-glutamine + H2O = L-glutamate + NH4(+). It functions in the pathway cofactor biosynthesis; pyridoxal 5'-phosphate biosynthesis. Functionally, catalyzes the hydrolysis of glutamine to glutamate and ammonia as part of the biosynthesis of pyridoxal 5'-phosphate. The resulting ammonia molecule is channeled to the active site of PdxS. The sequence is that of Pyridoxal 5'-phosphate synthase subunit PdxT from Haemophilus ducreyi (strain 35000HP / ATCC 700724).